Here is a 168-residue protein sequence, read N- to C-terminus: tRNA-splicing endonuclease (168 aa).

Active-site residues include tyrosine 107, histidine 114, and lysine 145.

This sequence belongs to the tRNA-intron endonuclease family. Archaeal short subfamily. As to quaternary structure, homotetramer; although the tetramer contains four active sites, only two participate in the cleavage. Therefore, it should be considered as a dimer of dimers.

The enzyme catalyses pretRNA = a 3'-half-tRNA molecule with a 5'-OH end + a 5'-half-tRNA molecule with a 2',3'-cyclic phosphate end + an intron with a 2',3'-cyclic phosphate and a 5'-hydroxyl terminus.. Endonuclease that removes tRNA introns. Cleaves pre-tRNA at the 5'- and 3'-splice sites to release the intron. The products are an intron and two tRNA half-molecules bearing 2',3' cyclic phosphate and 5'-OH termini. Recognizes a pseudosymmetric substrate in which 2 bulged loops of 3 bases are separated by a stem of 4 bp. In Thermococcus kodakarensis (strain ATCC BAA-918 / JCM 12380 / KOD1) (Pyrococcus kodakaraensis (strain KOD1)), this protein is tRNA-splicing endonuclease.